Consider the following 173-residue polypeptide: NADH-ubiquinone oxidoreductase chain 6 (173 aa).

4 consecutive transmembrane segments (helical) span residues 24-44 (MSIM…TGTM), 49-69 (WLSY…FIYI), 80-100 (IKIN…TLMY), and 139-159 (PTVI…LAVV).

The protein belongs to the complex I subunit 6 family.

It is found in the mitochondrion membrane. It carries out the reaction a ubiquinone + NADH + 5 H(+)(in) = a ubiquinol + NAD(+) + 4 H(+)(out). Functionally, core subunit of the mitochondrial membrane respiratory chain NADH dehydrogenase (Complex I) that is believed to belong to the minimal assembly required for catalysis. Complex I functions in the transfer of electrons from NADH to the respiratory chain. The immediate electron acceptor for the enzyme is believed to be ubiquinone. The sequence is that of NADH-ubiquinone oxidoreductase chain 6 (ND6) from Locusta migratoria (Migratory locust).